We begin with the raw amino-acid sequence, 51 residues long: Mitochondrial import receptor subunit TOM5 homolog (51 aa).

Position 1 is an N-acetylmethionine (M1). K10 participates in a covalent cross-link: Glycyl lysine isopeptide (Lys-Gly) (interchain with G-Cter in SUMO2). Residues 27-45 (SIRNFLIYVALLRVTPFIL) traverse the membrane as a helical segment.

This sequence belongs to the Tom5 family. Forms part of the preprotein translocase complex of the outer mitochondrial membrane (TOM complex) which consists of at least 7 different proteins (TOMM5, TOMM6, TOMM7, TOMM20, TOMM22, TOMM40 and TOMM70).

It is found in the mitochondrion outer membrane. The polypeptide is Mitochondrial import receptor subunit TOM5 homolog (Bos taurus (Bovine)).